Here is a 379-residue protein sequence, read N- to C-terminus: Pre-mRNA-processing protein 45 (379 aa).

Residues 1–10 (MFSNRLPPPK) are compositionally biased toward pro residues. Disordered stretches follow at residues 1–22 (MFSNRLPPPKHSQGRVSTALSS) and 353–379 (SEGASGSHGPIQFTKAESDDKSDNYGA). A compositionally biased stretch (basic and acidic residues) spans 368-379 (AESDDKSDNYGA).

It belongs to the SNW family. In terms of assembly, belongs to the CWC complex (or CEF1-associated complex), a spliceosome sub-complex reminiscent of a late-stage spliceosome composed of the U2, U5 and U6 snRNAs and at least BUD13, BUD31, BRR2, CDC40, CEF1, CLF1, CUS1, CWC2, CWC15, CWC21, CWC22, CWC23, CWC24, CWC25, CWC27, ECM2, HSH155, IST3, ISY1, LEA1, MSL1, NTC20, PRP8, PRP9, PRP11, PRP19, PRP21, PRP22, PRP45, PRP46, SLU7, SMB1, SMD1, SMD2, SMD3, SMX2, SMX3, SNT309, SNU114, SPP2, SYF1, SYF2, RSE1 and YJU2. Interacts with CLF1, PRP22 and PRP46. Interacts with SPP382.

It localises to the nucleus. Functionally, involved in pre-mRNA splicing. Associated with the spliceosome throughout the splicing reactions, until after the second catalytic step. In Saccharomyces cerevisiae (strain ATCC 204508 / S288c) (Baker's yeast), this protein is Pre-mRNA-processing protein 45 (PRP45).